Consider the following 632-residue polypeptide: tRNA uridine 5-carboxymethylaminomethyl modification enzyme MnmG (632 aa).

Residues 15 to 20 (GAGHAG), valine 127, and serine 182 each bind FAD. A disordered region spans residues 203–226 (TPPRVKSSTIDYSKTEEQPGDDHP). Basic and acidic residues predominate over residues 215 to 226 (SKTEEQPGDDHP). 274-288 (GARYCPSIEDKIVRF) is an NAD(+) binding site. Glutamine 371 provides a ligand contact to FAD.

This sequence belongs to the MnmG family. Homodimer. Heterotetramer of two MnmE and two MnmG subunits. The cofactor is FAD.

Its subcellular location is the cytoplasm. Functionally, NAD-binding protein involved in the addition of a carboxymethylaminomethyl (cmnm) group at the wobble position (U34) of certain tRNAs, forming tRNA-cmnm(5)s(2)U34. The chain is tRNA uridine 5-carboxymethylaminomethyl modification enzyme MnmG from Listeria monocytogenes serotype 4b (strain F2365).